The primary structure comprises 494 residues: ATP-dependent RNA helicase HAS1 (494 aa).

The segment at 1 to 23 is disordered; it reads MAQTKRSRDESEKEEVVVKADVE. A Q motif motif is present at residues 29 to 57; sequence HSFKSLNLSQPTMRAIEKMGFSKMTPVQA. Residues 60-236 form the Helicase ATP-binding domain; sequence IPPLMAGRDV…RISLRPGPLF (177 aa). An ATP-binding site is contributed by 73–80; sequence AKTGSGKT. Residues 183–186 carry the DEAD box motif; that stretch reads DEAD. Residues 250–420 enclose the Helicase C-terminal domain; that stretch reads GLEQGYVVCE…NVQSQLEKLI (171 aa). The Bipartite nuclear localization signal motif lies at 262 to 278; sequence KRFLLLFSFLKRNQKKK.

It belongs to the DEAD box helicase family. DDX18/HAS1 subfamily. As to quaternary structure, associates in the nucleolus with the 60S and pre-60S ribosomal subunits.

Its subcellular location is the nucleus. It is found in the nucleolus. The catalysed reaction is ATP + H2O = ADP + phosphate + H(+). Its function is as follows. ATP-dependent RNA helicase involved in 40S ribosomal subunit biogenesis. Required for the processing and cleavage of 35S pre-rRNA at sites A0, A1, and A2, leading to mature 18S rRNA. The polypeptide is ATP-dependent RNA helicase HAS1 (HAS1) (Candida glabrata (strain ATCC 2001 / BCRC 20586 / JCM 3761 / NBRC 0622 / NRRL Y-65 / CBS 138) (Yeast)).